The chain runs to 341 residues: MILLENVKKIYKAKSGDVTAVDNANLKIEKGEIFGVIGYSGAGKSSLIRLFNQLEKPTSGQITIANRVISAITGSELRKARQEIGMIFQHFNLLWSRTVRENIEFPLEIAGVDKAKRRKRVDELIHLVGLEGRGDAYPSQLSGGQKQRVGIARALANNPQVLLCDEATSALDPETTDQILDLLLDINKRLGLTIVLITHEMHVIRKICNRVAVMEKGKIVETGPVLDVFRNPKQDITKRFVQQLTDSEDTNETIESLIEKYPDGKVIRLQFIGEAVERPVLQRLMQRSDIEVSILQGNIAQTNNGSYGSLVVHLNGEETAIQQAIEGIHQDQVELEVIAHG.

The ABC transporter domain maps to 2–241 (ILLENVKKIY…PKQDITKRFV (240 aa)). 38 to 45 (GYSGAGKS) provides a ligand contact to ATP.

The protein belongs to the ABC transporter superfamily. Methionine importer (TC 3.A.1.24) family. In terms of assembly, the complex is composed of two ATP-binding proteins (MetN), two transmembrane proteins (MetI) and a solute-binding protein (MetQ).

It is found in the cell membrane. It catalyses the reaction L-methionine(out) + ATP + H2O = L-methionine(in) + ADP + phosphate + H(+). The enzyme catalyses D-methionine(out) + ATP + H2O = D-methionine(in) + ADP + phosphate + H(+). In terms of biological role, part of the ABC transporter complex MetNIQ involved in methionine import. Responsible for energy coupling to the transport system. The chain is Methionine import ATP-binding protein MetN 3 from Bacillus cereus (strain ATCC 14579 / DSM 31 / CCUG 7414 / JCM 2152 / NBRC 15305 / NCIMB 9373 / NCTC 2599 / NRRL B-3711).